The chain runs to 512 residues: Ribose import ATP-binding protein RbsA 2 (512 aa).

ABC transporter domains follow at residues 7–242 (LEIR…VGRE) and 257–498 (LGEP…SGIG). 39–46 (GENGAGKS) serves as a coordination point for ATP.

The protein belongs to the ABC transporter superfamily. Ribose importer (TC 3.A.1.2.1) family. The complex is composed of an ATP-binding protein (RbsA), two transmembrane proteins (RbsC) and a solute-binding protein (RbsB).

It localises to the cell inner membrane. It catalyses the reaction D-ribose(out) + ATP + H2O = D-ribose(in) + ADP + phosphate + H(+). Its function is as follows. Part of the ABC transporter complex RbsABC involved in ribose import. Responsible for energy coupling to the transport system. The sequence is that of Ribose import ATP-binding protein RbsA 2 from Rhizobium meliloti (strain 1021) (Ensifer meliloti).